Consider the following 646-residue polypeptide: Esterase EstA (646 aa).

The signal sequence occupies residues 1 to 24; it reads MIRMALKPLVAACLLASLSTAPQA. Residues 25-397 lie on the Extracellular side of the membrane; it reads APSPYSTLVV…DSAASGDGNG (373 aa). Residue serine 38 is the Nucleophile of the active site. Residues aspartate 310 and histidine 313 contribute to the active site. One can recognise an Autotransporter domain in the interval 366–646; that stretch reads QNVGQWRGFV…SVSLALSLDF (281 aa). Residues 398–408 form a beta stranded membrane-spanning segment; it reads YNLTLGGSYRI. Over 409–410 the chain is Periplasmic; that stretch reads DE. The chain crosses the membrane as a beta stranded span at residues 411–421; the sequence is AWRAGVAAGFY. At 422-437 the chain is on the extracellular side; that stretch reads RQKLEAGAKDSDYRMN. A beta stranded membrane pass occupies residues 438 to 447; sequence SYMASAFVQY. Over 448–451 the chain is Periplasmic; it reads QENR. The beta stranded transmembrane segment at 452–461 threads the bilayer; that stretch reads WWADAALTGG. The Extracellular segment spans residues 462–488; sequence YLDYDDLKRKFALGGGERSEKGDTNGH. The beta stranded transmembrane segment at 489–500 threads the bilayer; it reads LWAFSARLGYDI. At 501–507 the chain is on the periplasmic side; the sequence is AQQADSP. A beta stranded transmembrane segment spans residues 508–518; it reads WHLSPFVSADY. Residues 519–547 are Extracellular-facing; it reads ARVEVDGYSEKGASATALDYDDQKRSSKR. Residues 548–558 traverse the membrane as a beta stranded segment; the sequence is LGAGLQGKYAF. Over 559 to 561 the chain is Periplasmic; sequence GSD. The beta stranded transmembrane segment at 562 to 571 threads the bilayer; the sequence is TQLFAEYAHE. Residues 572–605 lie on the Extracellular side of the membrane; the sequence is REYEDDTQDLTMSLNSLPGNRFTLEGYTPQDHLN. The beta stranded transmembrane segment at 606–615 threads the bilayer; sequence RVSLGFSQKL. Over 616 to 618 the chain is Periplasmic; that stretch reads APE. Residues 619 to 628 traverse the membrane as a beta stranded segment; sequence LSLRGGYNWR. Topologically, residues 629 to 636 are extracellular; that stretch reads KGEDDTQQ. Residues 637-646 form a beta stranded membrane-spanning segment; the sequence is SVSLALSLDF.

The protein belongs to the 'GDSL' lipolytic enzyme family.

The protein resides in the cell outer membrane. The enzyme catalyses a carboxylic ester + H2O = an alcohol + a carboxylate + H(+). Esterase whose enzymatic activity is required for rhamnolipid production, all kinds of cell motility (swimming, swarming, and twitching), and biofilm formation; the exact role of EstA in these processes is unclear. In vitro, has pronounced esterase activities towards p-nitrophenyl esters of short acyl chain length (C4-C6) and Tween detergents. Also shows relatively high activity towards beta-naphthyl butyrate, whereas its activities towards triacylglycerols and acyls-CoA are negligible. This is Esterase EstA (estA) from Pseudomonas aeruginosa (strain ATCC 15692 / DSM 22644 / CIP 104116 / JCM 14847 / LMG 12228 / 1C / PRS 101 / PAO1).